Reading from the N-terminus, the 57-residue chain is UPF0391 membrane protein bsl6560 (57 aa).

2 consecutive transmembrane segments (helical) span residues 4–24 (WVVTFLVIALIAGILGFGGIA) and 30–50 (IAKIIFFIAVVLFLVSAVVGL).

This sequence belongs to the UPF0391 family.

The protein resides in the cell membrane. The chain is UPF0391 membrane protein bsl6560 from Bradyrhizobium diazoefficiens (strain JCM 10833 / BCRC 13528 / IAM 13628 / NBRC 14792 / USDA 110).